A 253-amino-acid polypeptide reads, in one-letter code: ER membrane protein complex subunit 3 (253 aa).

3 helical membrane-spanning segments follow: residues 10 to 30 (WVLLPISIVMVLTGVLKQYIM), 126 to 146 (FIPQTIIMWWVNHFFAGFILM), and 176 to 196 (SISWYFISVLGLNPVYNLIGL).

This sequence belongs to the EMC3 family. Component of the ER membrane protein complex (EMC), which is composed of EMC1, EMC2, EMC3, EMC4, EMC5 and EMC6.

The protein localises to the endoplasmic reticulum membrane. In terms of biological role, the EMC seems to be required for efficient folding of proteins in the endoplasmic reticulum (ER). The sequence is that of ER membrane protein complex subunit 3 (AIM27) from Saccharomyces cerevisiae (strain RM11-1a) (Baker's yeast).